Here is a 479-residue protein sequence, read N- to C-terminus: Heparin cofactor 2 (479 aa).

Positions 1-23 (MKHPAYTLLLSLIMSMCAGSKGL) are cleaved as a signal peptide. N-linked (GlcNAc...) asparagine glycosylation is present at asparagine 31. Tandem repeats lie at residues 55–65 (GEEDDDYLDLE) and 69–79 (SEDDDYIYVVD). The interval 55–79 (GEEDDDYLDLEKLLSEDDDYIYVVD) is 2 X 11 AA approximate repeats, Asp/Glu-rich (acidic) (hirudin-like). Residues tyrosine 61 and tyrosine 74 each carry the sulfotyrosine modification. N-linked (GlcNAc...) asparagine glycosylation is present at asparagine 168. Residues 172–192 (KYEVTTIHNLFRKLTHRLFRR) are glycosaminoglycan-binding site. 2 N-linked (GlcNAc...) asparagine glycosylation sites follow: asparagine 367 and asparagine 403.

The protein belongs to the serpin family. Post-translationally, different composition of the N-linked oligosaccharides appears to yield a 68-kDa and a 72-kDa form.

In terms of biological role, thrombin inhibitor activated by the glycosaminoglycans, heparin or dermatan sulfate. In the presence of the latter, HC-II becomes the predominant thrombin inhibitor in place of antithrombin III (AT). The polypeptide is Heparin cofactor 2 (Serpind1) (Rattus norvegicus (Rat)).